Consider the following 327-residue polypeptide: Pantothenate kinase (327 aa).

Position 105–112 (105–112 (GSVAVGKS)) interacts with ATP.

The protein belongs to the prokaryotic pantothenate kinase family.

It localises to the cytoplasm. It carries out the reaction (R)-pantothenate + ATP = (R)-4'-phosphopantothenate + ADP + H(+). The protein operates within cofactor biosynthesis; coenzyme A biosynthesis; CoA from (R)-pantothenate: step 1/5. In Cutibacterium acnes (strain DSM 16379 / KPA171202) (Propionibacterium acnes), this protein is Pantothenate kinase.